Consider the following 258-residue polypeptide: Malonyl-[acyl-carrier protein] O-methyltransferase (258 aa).

The protein belongs to the methyltransferase superfamily.

The enzyme catalyses malonyl-[ACP] + S-adenosyl-L-methionine = malonyl-[ACP] methyl ester + S-adenosyl-L-homocysteine. It functions in the pathway cofactor biosynthesis; biotin biosynthesis. Its function is as follows. Converts the free carboxyl group of a malonyl-thioester to its methyl ester by transfer of a methyl group from S-adenosyl-L-methionine (SAM). It allows to synthesize pimeloyl-ACP via the fatty acid synthetic pathway. The sequence is that of Malonyl-[acyl-carrier protein] O-methyltransferase from Haemophilus ducreyi (strain 35000HP / ATCC 700724).